Consider the following 205-residue polypeptide: Probable thymidylate kinase (205 aa).

ATP is bound at residue 7 to 14; it reads GIDGAGKS.

This sequence belongs to the thymidylate kinase family.

It catalyses the reaction dTMP + ATP = dTDP + ADP. This chain is Probable thymidylate kinase, found in Thermococcus onnurineus (strain NA1).